Here is a 494-residue protein sequence, read N- to C-terminus: MKTIAFDSNKYLNLQRDHILERISQFDGKLYMEFGGKMLEDYHAARVLPGYEPDNKIKLLKELKEQVEIVIAINANNIEHSKARGDLGISYDQEVFRLIDKFNTLDIYVGSVVITQYNNQPAADAFRKQLEKNGIASYLHYPIKGYPTDINHIISSEGMGKNDYIKTSRNLIVVTAPGPGSGKLATCMSQMYHDQINGVKSGYAKFETFPVWNLPLHHPVNLAYEAATADLDDVNMIDPFHLETYGKTAVNYNRDIEVFPVLNRTFERILSKSPYASPTDMGVNMVGFSIVNEEAAIEASKQEIIRRYYQTLVDFKAERVTESAVKKIELLMNDIGVTPDDRHVTVAAHQKAEQTGQPALALQLPNGQIVTGKTSELFGPTAAVIINAIKTLAKIDKTTHLIEPEYVKPIQGLKVNHLGSHNPRLHSNEILIALAITAMTSEEANLAMKELGNLKGSEAHSTVILTEEDKNVLRKLGVNITFDPVYQHHKLYRK.

This sequence belongs to the UPF0371 family.

This Streptococcus pyogenes serotype M18 (strain MGAS8232) protein is UPF0371 protein spyM18_1356.